The primary structure comprises 252 residues: Acetoacetate decarboxylase (252 aa).

Lysine 116 functions as the Schiff-base intermediate with acetoacetate in the catalytic mechanism.

This sequence belongs to the ADC family.

It carries out the reaction acetoacetate + H(+) = acetone + CO2. Catalyzes the conversion of acetoacetate to acetone and carbon dioxide. This Paraburkholderia xenovorans (strain LB400) protein is Acetoacetate decarboxylase.